Here is a 638-residue protein sequence, read N- to C-terminus: Exocyst complex component EXO70A1 (638 aa).

The disordered stretch occupies residues Phe-163–Asp-190.

It belongs to the EXO70 family. In terms of assembly, the exocyst complex is composed of SEC3, SEC5, SEC6, SEC8, SEC10, EXO70A1 and EXO84B. Interacts with SEC3A and EXO84B. Co-localizes with FPP3/VETH1, FPP2/VETH2 and COG2 in vesicle-like small motile compartments. May interact with COG2.

The protein localises to the cytoplasm. It localises to the cytosol. Its subcellular location is the cytoskeleton. It is found in the phragmoplast. The protein resides in the cell membrane. The protein localises to the secreted. It localises to the cell wall. Its function is as follows. Component of the exocyst complex involved in the docking of exocytic vesicles with fusion sites on the plasma membrane during regulated or polarized secretion. Involved in polarized cell growth and organ morphogenesis. Involved in polarized cell growth and organ morphogenesis. During cytokinesis, involved in cell plate initiation, cell plate maturation and formation of new primary cell wall. Participates in polarized pectin delivery required for the polarized development of the mucilage-producing volcano cells of the seed coat. Involved in the recycling and localization of auxin efflux carriers PIN1 and PIN2, and thus in polar auxin transport regulation. Functions in vesicle trafficking in tracheary elements to regulate patterned secondary cell wall (SCW) thickening. This Arabidopsis thaliana (Mouse-ear cress) protein is Exocyst complex component EXO70A1.